The chain runs to 206 residues: Small ribosomal subunit protein uS4 (206 aa).

The region spanning 96 to 156 (TRLDNVVYRM…EKSKKQARII (61 aa)) is the S4 RNA-binding domain.

It belongs to the universal ribosomal protein uS4 family. As to quaternary structure, part of the 30S ribosomal subunit. Contacts protein S5. The interaction surface between S4 and S5 is involved in control of translational fidelity.

In terms of biological role, one of the primary rRNA binding proteins, it binds directly to 16S rRNA where it nucleates assembly of the body of the 30S subunit. Its function is as follows. With S5 and S12 plays an important role in translational accuracy. The sequence is that of Small ribosomal subunit protein uS4 from Shewanella woodyi (strain ATCC 51908 / MS32).